Consider the following 199-residue polypeptide: Ribosome maturation factor RimM (199 aa).

One can recognise a PRC barrel domain in the interval 93-169; that stretch reads DDEYYHADLI…IELPDEIDGE (77 aa). The disordered stretch occupies residues 164-199; the sequence is DEIDGEDRASADESASAEDDAAAPNSARHPRESGDP.

This sequence belongs to the RimM family. As to quaternary structure, binds ribosomal protein uS19.

The protein localises to the cytoplasm. In terms of biological role, an accessory protein needed during the final step in the assembly of 30S ribosomal subunit, possibly for assembly of the head region. Essential for efficient processing of 16S rRNA. May be needed both before and after RbfA during the maturation of 16S rRNA. It has affinity for free ribosomal 30S subunits but not for 70S ribosomes. The protein is Ribosome maturation factor RimM of Bradyrhizobium sp. (strain ORS 278).